We begin with the raw amino-acid sequence, 210 residues long: Claudin-4 (210 aa).

The Cytoplasmic segment spans residues 1–7; the sequence is MASMGLQ. The tract at residues 1-103 is interaction with EPHA2; the sequence is MASMGLQVMG…GVLLSVVGGK (103 aa). A helical transmembrane segment spans residues 8–28; the sequence is VMGIALAVLGWLGAILSCALP. Over 29–81 the chain is Extracellular; the sequence is MWRVTAFIGSNIVTSQTIWEGLWMNCVVQSTGQMQCKVYDSLLALPQDLQAAR. C54 and C64 are disulfide-bonded. A helical transmembrane segment spans residues 82–102; that stretch reads ALMVVSIILAALGVLLSVVGG. Topologically, residues 103–117 are cytoplasmic; it reads KCTNCVEDESAKAKT. A helical transmembrane segment spans residues 118–138; the sequence is MIVAGVVFLLAGLLVMVPASW. Over 139–160 the chain is Extracellular; the sequence is TANNIIRDFYNPLVVSGQKREM. The chain crosses the membrane as a helical span at residues 161–181; the sequence is GASLYVGWAASGLLLLGGALL. Residues 182–210 are Cytoplasmic-facing; it reads CCNCPPRADKPYSAKYSAAARSAPASNYV. A Phosphotyrosine modification is found at Y209. The interval 209–210 is interactions with TJP1, TJP2 and TJP3; the sequence is YV.

It belongs to the claudin family. Can form heteropolymeric strands with other claudins. Interacts with CLDN8. Interacts with CLDN1. Directly interacts with TJP1/ZO-1. Interacts with TJP2/ZO-2 and TJP3/ZO-3. Interacts with EPHA2; phosphorylates CLDN4 and may regulate tight junctions. Phosphorylated. Phosphorylation by EPHA2 is stimulated by EFNA1 and alters interaction with TJP1.

It localises to the cell junction. The protein resides in the tight junction. Its subcellular location is the cell membrane. It carries out the reaction chloride(in) = chloride(out). The catalysed reaction is bromide(in) = bromide(out). The enzyme catalyses iodide(out) = iodide(in). It catalyses the reaction fluoride(in) = fluoride(out). Can associate with other claudins to regulate tight junction structural and functional strand dynamics. May coassemble with CLDN8 into tight junction strands containing anion-selective channels that convey paracellular chloride permeability in renal collecting ducts. May integrate into CLDN3 strands to modulate localized tight junction barrier properties. May disrupt strand assembly of channel-forming CLDN2 and CLDN15 and inhibit cation conductance. Cannot form tight junction strands on its own. The protein is Claudin-4 (CLDN4) of Canis lupus familiaris (Dog).